The chain runs to 150 residues: UPF0756 membrane protein PMI1560 (150 aa).

The next 4 helical transmembrane spans lie at 16-36, 51-71, 82-102, and 123-143; these read GLGI…LLVI, YGMT…IATG, FLNW…WLGA, and VIGV…AGIL.

Belongs to the UPF0756 family.

The protein resides in the cell membrane. In Proteus mirabilis (strain HI4320), this protein is UPF0756 membrane protein PMI1560.